Here is a 264-residue protein sequence, read N- to C-terminus: Thymidylate synthase (264 aa).

DUMP is bound at residue arginine 21. Histidine 51 provides a ligand contact to (6R)-5,10-methylene-5,6,7,8-tetrahydrofolate. 126–127 (RR) is a dUMP binding site. The active-site Nucleophile is the cysteine 146. Residues 166–169 (RSCD), asparagine 177, and 207–209 (HLY) each bind dUMP. A (6R)-5,10-methylene-5,6,7,8-tetrahydrofolate-binding site is contributed by aspartate 169. A (6R)-5,10-methylene-5,6,7,8-tetrahydrofolate-binding site is contributed by alanine 263.

It belongs to the thymidylate synthase family. Bacterial-type ThyA subfamily. In terms of assembly, homodimer.

The protein resides in the cytoplasm. It catalyses the reaction dUMP + (6R)-5,10-methylene-5,6,7,8-tetrahydrofolate = 7,8-dihydrofolate + dTMP. It functions in the pathway pyrimidine metabolism; dTTP biosynthesis. In terms of biological role, catalyzes the reductive methylation of 2'-deoxyuridine-5'-monophosphate (dUMP) to 2'-deoxythymidine-5'-monophosphate (dTMP) while utilizing 5,10-methylenetetrahydrofolate (mTHF) as the methyl donor and reductant in the reaction, yielding dihydrofolate (DHF) as a by-product. This enzymatic reaction provides an intracellular de novo source of dTMP, an essential precursor for DNA biosynthesis. This is Thymidylate synthase from Shewanella baltica (strain OS223).